The primary structure comprises 106 residues: ATP-dependent Clp protease adapter protein ClpS (106 aa).

Belongs to the ClpS family. Binds to the N-terminal domain of the chaperone ClpA.

Its function is as follows. Involved in the modulation of the specificity of the ClpAP-mediated ATP-dependent protein degradation. In Escherichia coli O127:H6 (strain E2348/69 / EPEC), this protein is ATP-dependent Clp protease adapter protein ClpS.